The chain runs to 249 residues: Triosephosphate isomerase (249 aa).

Substrate contacts are provided by Asn12 and Lys14. Position 14 is an N6-acetyllysine (Lys14). The residue at position 68 (Tyr68) is a 3'-nitrotyrosine. Ser80 and Ser106 each carry phosphoserine. Residue Lys142 forms a Glycyl lysine isopeptide (Lys-Gly) (interchain with G-Cter in SUMO1) linkage. The residue at position 149 (Lys149) is an N6-succinyllysine. Lys156 carries the N6-acetyllysine; alternate modification. The residue at position 156 (Lys156) is an N6-succinyllysine; alternate. Ser159 carries the post-translational modification Phosphoserine. The Proton acceptor role is filled by Glu166. The residue at position 173 (Thr173) is a Phosphothreonine. Lys194 carries the N6-acetyllysine; alternate modification. Lys194 carries the N6-succinyllysine; alternate modification. Lys194 is subject to N6-methyllysine; alternate. Phosphoserine is present on Ser198. 3'-nitrotyrosine is present on Tyr209. Ser212 carries the phosphoserine modification. Residue Thr214 is modified to Phosphothreonine. Ser223 is modified (phosphoserine). Lys238 bears the N6-acetyllysine mark.

It belongs to the triosephosphate isomerase family. In terms of assembly, homodimer.

It localises to the cytoplasm. The enzyme catalyses D-glyceraldehyde 3-phosphate = dihydroxyacetone phosphate. The catalysed reaction is dihydroxyacetone phosphate = methylglyoxal + phosphate. The protein operates within carbohydrate biosynthesis; gluconeogenesis. Its pathway is carbohydrate degradation; glycolysis; D-glyceraldehyde 3-phosphate from glycerone phosphate: step 1/1. In terms of biological role, triosephosphate isomerase is an extremely efficient metabolic enzyme that catalyzes the interconversion between dihydroxyacetone phosphate (DHAP) and D-glyceraldehyde-3-phosphate (G3P) in glycolysis and gluconeogenesis. Its function is as follows. It is also responsible for the non-negligible production of methylglyoxal a reactive cytotoxic side-product that modifies and can alter proteins, DNA and lipids. This Mesocricetus auratus (Golden hamster) protein is Triosephosphate isomerase.